The sequence spans 673 residues: Thimet-like oligopeptidase (673 aa).

His-465 serves as a coordination point for Zn(2+). Residue Glu-466 is part of the active site. 2 residues coordinate Zn(2+): His-469 and His-472.

It belongs to the peptidase M3 family. Requires Zn(2+) as cofactor.

In Dictyostelium discoideum (Social amoeba), this protein is Thimet-like oligopeptidase.